Reading from the N-terminus, the 325-residue chain is Melanocortin receptor 5 (325 aa).

Over 1 to 37 (MNSSFHLHFLDLGLNATEGNLSGLSVRNASSPCEDMG) the chain is Extracellular. N-linked (GlcNAc...) asparagine glycosylation is found at N2, N15, N20, and N28. The helical transmembrane segment at 38 to 61 (IAVEVFLALGLISLLENILVIGAI) threads the bilayer. The Cytoplasmic portion of the chain corresponds to 62 to 73 (VRNRNLHIPMYF). Residues 74–97 (FVGSLAVADMLVSLSNFWETITIY) traverse the membrane as a helical segment. At 98-114 (LLTNKHLVMADASVRHL) the chain is on the extracellular side. A helical membrane pass occupies residues 115–138 (DNVFDSMICISVVASMCSLLAIAV). The Cytoplasmic portion of the chain corresponds to 139-155 (DRYVTIFCRLRYQRIMT). Residues 156 to 179 (GRRSGAIIAGIWAFCTSCGTVFIV) form a helical membrane-spanning segment. At 180–186 (YYESTYV) the chain is on the extracellular side. The helical transmembrane segment at 187–211 (VVCLIAMFLTMLLLMASLYTHMFLL) threads the bilayer. Over 212–239 (ARTHVRRIAALPGHSSVRQRTGVKGAIT) the chain is Cytoplasmic. The helical transmembrane segment at 240–265 (LAMLLGVFIICWAPFFLHLILMISCP) threads the bilayer. At 266-273 (QNLYCSCF) the chain is on the extracellular side. A helical transmembrane segment spans residues 274–297 (MSHFNMYLILIMCNSVIDPLIYAF). At 298 to 325 (RSQEMRKTFKEIVCFQGFRTPCRFPSTY) the chain is on the cytoplasmic side. Residue C311 is the site of S-palmitoyl cysteine attachment.

It belongs to the G-protein coupled receptor 1 family.

Its subcellular location is the cell membrane. Receptor for MSH (alpha, beta and gamma) and ACTH. The activity of this receptor is mediated by G proteins which activate adenylate cyclase. This receptor is a possible mediator of the immunomodulation properties of melanocortins. This chain is Melanocortin receptor 5 (MC5R), found in Ovis aries (Sheep).